The sequence spans 115 residues: Large ribosomal subunit protein bL19 (115 aa).

It belongs to the bacterial ribosomal protein bL19 family.

Its function is as follows. This protein is located at the 30S-50S ribosomal subunit interface and may play a role in the structure and function of the aminoacyl-tRNA binding site. The sequence is that of Large ribosomal subunit protein bL19 from Streptococcus uberis (strain ATCC BAA-854 / 0140J).